Consider the following 615-residue polypeptide: Extracellular metalloproteinase 1 (615 aa).

The N-terminal stretch at Ser-1–Ala-8 is a signal peptide. Positions His-9 to His-235 are excised as a propeptide. The N-linked (GlcNAc...) asparagine glycan is linked to Asn-276. Residue His-419 participates in Zn(2+) binding. Glu-420 is a catalytic residue. His-423 lines the Zn(2+) pocket. N-linked (GlcNAc...) asparagine glycosylation is found at Asn-464, Asn-583, and Asn-612.

The protein belongs to the peptidase M36 family. Zn(2+) serves as cofactor.

Its subcellular location is the secreted. In terms of biological role, secreted metalloproteinase probably acting as a virulence factor. The polypeptide is Extracellular metalloproteinase 1 (MEP1) (Trichophyton equinum (Horse ringworm fungus)).